The following is a 150-amino-acid chain: Putative F-box protein At2g33655 (150 aa).

Positions 1–47 constitute an F-box domain; that stretch reads MEKMSDLPRELVEEILSRVPVKSMREVRVTCKTWNALSKHISKAEAA.

The chain is Putative F-box protein At2g33655 from Arabidopsis thaliana (Mouse-ear cress).